A 186-amino-acid polypeptide reads, in one-letter code: RNA-free ribonuclease P (186 aa).

The protein belongs to the HARP family.

The catalysed reaction is Endonucleolytic cleavage of RNA, removing 5'-extranucleotides from tRNA precursor.. Its function is as follows. RNA-free RNase P that catalyzes the removal of the 5'-leader sequence from pre-tRNA to produce the mature 5'-terminus. This chain is RNA-free ribonuclease P, found in Hydrogenobaculum sp. (strain Y04AAS1).